A 1112-amino-acid polypeptide reads, in one-letter code: Lacto-N-biosidase (1112 aa).

The first 34 residues, 1 to 34 (MEKSSNRRFGVRTVAAIVAGLMVGGMCTAMTASA), serve as a signal peptide directing secretion. Cys-187 and Cys-189 are disulfide-bonded. Residues Gln-190, Glu-216, Asn-259, Asp-320, Glu-321, Tyr-419, and Asp-467 each contribute to the beta-D-galactosyl-(1-&gt;3)-N-acetyl-D-glucosamine site. Glu-321 functions as the Proton donor/acceptor in the catalytic mechanism. Cys-564 and Cys-589 are joined by a disulfide. The tract at residues 938–969 (ATPVELTEPEQPKDNPEVTETPEATGVTVSGD) is disordered. Residues 975-1041 (ALSLKKGTTA…ANGKSASVTV (67 aa)) form the BIG2 domain. Positions 1044–1061 (TEDSEVPGPTGPTEPTKP) are enriched in low complexity. Positions 1044 to 1081 (TEDSEVPGPTGPTEPTKPGTEKPTTKPTTKPNDGKLSA) are disordered. Residues 1086-1106 (TAVLATIAALFALAGGAVVAV) form a helical membrane-spanning segment.

Belongs to the glycosyl hydrolase 20 family.

It is found in the cell membrane. It catalyses the reaction beta-D-Gal-(1-&gt;3)-beta-D-GlcNAc-(1-&gt;3)-beta-D-Gal-(1-&gt;4)-D-Glc + H2O = beta-D-galactosyl-(1-&gt;3)-N-acetyl-D-glucosamine + lactose. Functionally, present in the infant gut, this enzyme is involved in the assimilation of type-1 human milk oligosaccharides (HMOs). It hydrolyzes via a retaining mechanism the beta-D-GlcNAc-(1-&gt;3)-beta-D-Gal linkage in lacto-N-tetraose (LNT or beta-D-Gal-(1-&gt;3)-beta-D-GlcNAc-(1-&gt;3)-beta-D-Gal-(1-&gt;4)-D-Glc), an abundant HMO unique to human breast milk, releasing lacto-N-biose (LNB or beta-D-Gal-(1-&gt;3)-D-GlcNAc) and lactose. Is a key enzymatic factor for growth and proliferation of B.bifidum in the gut ecosystem of breast-fed infants. Has substrate preference for unmodified beta-linked LNB since it does not hydrolyze the fucosylated forms of lacto-N-tetraose (lacto-N-fucopentaose I and II) or lacto-N-neotetraose. Is also able to display transglycosylation activity in vitro. This chain is Lacto-N-biosidase, found in Bifidobacterium bifidum (strain DSM 20082 / JCM 1254 / BCRC 11844 / KCTC 3440 / E319f (Variant a)).